A 156-amino-acid chain; its full sequence is Small ribosomal subunit protein uS7 (156 aa).

The protein belongs to the universal ribosomal protein uS7 family. In terms of assembly, part of the 30S ribosomal subunit. Contacts proteins S9 and S11.

In terms of biological role, one of the primary rRNA binding proteins, it binds directly to 16S rRNA where it nucleates assembly of the head domain of the 30S subunit. Is located at the subunit interface close to the decoding center, probably blocks exit of the E-site tRNA. In Bifidobacterium longum subsp. infantis (strain ATCC 15697 / DSM 20088 / JCM 1222 / NCTC 11817 / S12), this protein is Small ribosomal subunit protein uS7.